Consider the following 486-residue polypeptide: Glutamyl-tRNA(Gln) amidotransferase subunit A (486 aa).

Active-site charge relay system residues include Lys-76 and Ser-151. Residue Ser-175 is the Acyl-ester intermediate of the active site.

The protein belongs to the amidase family. GatA subfamily. Heterotrimer of A, B and C subunits.

The catalysed reaction is L-glutamyl-tRNA(Gln) + L-glutamine + ATP + H2O = L-glutaminyl-tRNA(Gln) + L-glutamate + ADP + phosphate + H(+). Its function is as follows. Allows the formation of correctly charged Gln-tRNA(Gln) through the transamidation of misacylated Glu-tRNA(Gln) in organisms which lack glutaminyl-tRNA synthetase. The reaction takes place in the presence of glutamine and ATP through an activated gamma-phospho-Glu-tRNA(Gln). This Marinomonas sp. (strain MWYL1) protein is Glutamyl-tRNA(Gln) amidotransferase subunit A.